Here is a 626-residue protein sequence, read N- to C-terminus: Biosynthetic arginine decarboxylase (626 aa).

An N6-(pyridoxal phosphate)lysine modification is found at K99. 279 to 289 (VDVGGGLGVDY) lines the substrate pocket.

The protein belongs to the Orn/Lys/Arg decarboxylase class-II family. SpeA subfamily. It depends on Mg(2+) as a cofactor. Pyridoxal 5'-phosphate is required as a cofactor.

It catalyses the reaction L-arginine + H(+) = agmatine + CO2. Its pathway is amine and polyamine biosynthesis; agmatine biosynthesis; agmatine from L-arginine: step 1/1. In terms of biological role, catalyzes the biosynthesis of agmatine from arginine. The protein is Biosynthetic arginine decarboxylase of Chromobacterium violaceum (strain ATCC 12472 / DSM 30191 / JCM 1249 / CCUG 213 / NBRC 12614 / NCIMB 9131 / NCTC 9757 / MK).